The chain runs to 1262 residues: ATP-dependent helicase/nuclease subunit A (1262 aa).

A UvrD-like helicase ATP-binding domain is found at 5–476 (FSFTPSQDQA…IVLAENFRSM (472 aa)). Position 26-33 (26-33 (ASAGSGKT)) interacts with ATP. Residues 515-808 (DTVTSTAELL…SVMTIHGSKG (294 aa)) form the UvrD-like helicase C-terminal domain.

The protein belongs to the helicase family. AddA subfamily. Heterodimer of AddA and AddB/RexB. Mg(2+) is required as a cofactor.

It catalyses the reaction Couples ATP hydrolysis with the unwinding of duplex DNA by translocating in the 3'-5' direction.. The catalysed reaction is ATP + H2O = ADP + phosphate + H(+). In terms of biological role, the heterodimer acts as both an ATP-dependent DNA helicase and an ATP-dependent, dual-direction single-stranded exonuclease. Recognizes the chi site generating a DNA molecule suitable for the initiation of homologous recombination. The AddA nuclease domain is required for chi fragment generation; this subunit has the helicase and 3' -&gt; 5' nuclease activities. This Levilactobacillus brevis (strain ATCC 367 / BCRC 12310 / CIP 105137 / JCM 1170 / LMG 11437 / NCIMB 947 / NCTC 947) (Lactobacillus brevis) protein is ATP-dependent helicase/nuclease subunit A.